A 458-amino-acid chain; its full sequence is Glycogen synthase (458 aa).

K15 provides a ligand contact to ADP-alpha-D-glucose.

Belongs to the glycosyltransferase 1 family. Bacterial/plant glycogen synthase subfamily.

It catalyses the reaction [(1-&gt;4)-alpha-D-glucosyl](n) + ADP-alpha-D-glucose = [(1-&gt;4)-alpha-D-glucosyl](n+1) + ADP + H(+). Its pathway is glycan biosynthesis; glycogen biosynthesis. In terms of biological role, synthesizes alpha-1,4-glucan chains using ADP-glucose. The polypeptide is Glycogen synthase (Gloeobacter violaceus (strain ATCC 29082 / PCC 7421)).